A 510-amino-acid polypeptide reads, in one-letter code: MSHLVLKPGTLTLSQIRDISRNKLTLELADEAIADINISSGIVQKIIDEGRTVYGINTGFGLLANTKIEDKDLQLLQRSIVLSHAAGTGQYMQDATVRLMMVLKINSLSRGFSGIRLEVINFLIQLVNAEVYPCVPEKGSVGASGDLAPLSHMSLTLLGEGEVSYKGQIMSAKEGLEIAGLEPIELAAKEGLALLNGTQASTALALEGLFNAEDLFAASSVIGAMSVEAAMGSRSPFDPRIHAARGQKGQMDAAGLFRHLLGDESEISLSHVDCEKVQDPYSLRCQPQVLGACLTQIRQAAEVLGTEANGVTDNPLVFQDTGDIISGGNFHAEPVAMAADNLAIALAELGAIAERRIALLIDPNLSKLPPFLVENGGVNSGFMIAQVTAAALASENKTYAHPASVDSLPTSANQEDHVSMATFAARRLRDMSENTRGVLAIELLAAAQGLDFRAPLQPSAAVAKAKAELREVVTYYDKDRFFGPDIEASTDLLLTSSFNSYLPAGILASF.

Residues A143–G145 constitute a cross-link (5-imidazolinone (Ala-Gly)). A 2,3-didehydroalanine (Ser) modification is found at S144.

Belongs to the PAL/histidase family. Post-translationally, contains an active site 4-methylidene-imidazol-5-one (MIO), which is formed autocatalytically by cyclization and dehydration of residues Ala-Ser-Gly.

It is found in the cytoplasm. It catalyses the reaction L-histidine = trans-urocanate + NH4(+). The protein operates within amino-acid degradation; L-histidine degradation into L-glutamate; N-formimidoyl-L-glutamate from L-histidine: step 1/3. The protein is Histidine ammonia-lyase of Shewanella woodyi (strain ATCC 51908 / MS32).